Reading from the N-terminus, the 104-residue chain is MIRKAFVMSVNAGCEAEYERRHRPIWAELAQVLKAHGVHNYSIFLHPQTRQLFGYVEIEDEARWAAIARTPECQRWWKHMGDVMPSNPDFSPVSADLREVFHLD.

A substrate-binding site is contributed by Y18. Residue H22 is the Proton donor of the active site. Substrate-binding positions include Y41 and 76–77 (WW).

The protein belongs to the rhamnose mutarotase family. As to quaternary structure, homodimer.

Its subcellular location is the cytoplasm. It carries out the reaction alpha-L-rhamnose = beta-L-rhamnose. The protein operates within carbohydrate metabolism; L-rhamnose metabolism. Functionally, involved in the anomeric conversion of L-rhamnose. The chain is L-rhamnose mutarotase from Opitutus terrae (strain DSM 11246 / JCM 15787 / PB90-1).